A 117-amino-acid chain; its full sequence is Ribonuclease P protein component (117 aa).

Belongs to the RnpA family. As to quaternary structure, consists of a catalytic RNA component (M1 or rnpB) and a protein subunit.

The enzyme catalyses Endonucleolytic cleavage of RNA, removing 5'-extranucleotides from tRNA precursor.. In terms of biological role, RNaseP catalyzes the removal of the 5'-leader sequence from pre-tRNA to produce the mature 5'-terminus. It can also cleave other RNA substrates such as 4.5S RNA. The protein component plays an auxiliary but essential role in vivo by binding to the 5'-leader sequence and broadening the substrate specificity of the ribozyme. This chain is Ribonuclease P protein component, found in Lactococcus lactis subsp. cremoris (strain MG1363).